We begin with the raw amino-acid sequence, 103 residues long: Alpha-ketoglutarate dehydrogenase component 4 (103 aa).

An N-acetylmethionine modification is found at methionine 1. Residue lysine 5 is modified to N6-succinyllysine. The disordered stretch occupies residues threonine 20 to glycine 69. The segment covering serine 47–serine 56 has biased composition (polar residues). A phosphoserine mark is found at serine 49, serine 61, and serine 90.

The protein belongs to the alpha-ketoglutarate dehydrogenase component 4 family. As to quaternary structure, component of the 2-oxoglutarate dehydrogenase complex (OGDHC), composed of OGDH (2-oxoglutarate dehydrogenase; also called E1 subunit), DLST (dihydrolipoamide succinyltransferase; also called E2 subunit) and DLD (dihydrolipoamide dehydrogenase; also called E3 subunit), and the assembly factor KGD4. Within OGDHC complex, interacts (via N-terminus) with E3 subunit and (via C-terminus) with E2 subunit.

It localises to the mitochondrion. In terms of biological role, molecular adapter that is necessary to form a stable 2-oxoglutarate dehydrogenase enzyme complex (OGDHC). Enables the specific recruitment of E3 subunit to E2 subunit in the 2-oxoglutarate dehydrogenase complex (OGDHC). This Homo sapiens (Human) protein is Alpha-ketoglutarate dehydrogenase component 4.